We begin with the raw amino-acid sequence, 91 residues long: Small ribosomal subunit protein uS15 (91 aa).

It belongs to the universal ribosomal protein uS15 family. In terms of assembly, part of the 30S ribosomal subunit. Forms a bridge to the 50S subunit in the 70S ribosome, contacting the 23S rRNA.

In terms of biological role, one of the primary rRNA binding proteins, it binds directly to 16S rRNA where it helps nucleate assembly of the platform of the 30S subunit by binding and bridging several RNA helices of the 16S rRNA. Forms an intersubunit bridge (bridge B4) with the 23S rRNA of the 50S subunit in the ribosome. The polypeptide is Small ribosomal subunit protein uS15 (Deinococcus radiodurans (strain ATCC 13939 / DSM 20539 / JCM 16871 / CCUG 27074 / LMG 4051 / NBRC 15346 / NCIMB 9279 / VKM B-1422 / R1)).